Here is a 129-residue protein sequence, read N- to C-terminus: MSNVPAELKYSKEHEWLRKEADGTYTVGITEHAQELLGDMVFVDLPEVGATVSAGDDCAVAESVKAASDIYAPVSGEIVAVNDALSDSPELVNSEPYAGGWIFKIKASDESELESLLDATAYETLLEDE.

A Lipoyl-binding domain is found at 24–106 (TYTVGITEHA…YAGGWIFKIK (83 aa)). Lys65 bears the N6-lipoyllysine mark.

The protein belongs to the GcvH family. As to quaternary structure, the glycine cleavage system is composed of four proteins: P, T, L and H. (R)-lipoate serves as cofactor.

The glycine cleavage system catalyzes the degradation of glycine. The H protein shuttles the methylamine group of glycine from the P protein to the T protein. This is Glycine cleavage system H protein from Escherichia coli O139:H28 (strain E24377A / ETEC).